Here is a 442-residue protein sequence, read N- to C-terminus: UDP-N-acetylmuramoylalanine--D-glutamate ligase (442 aa).

115-121 (GSNGKST) lines the ATP pocket.

It belongs to the MurCDEF family.

It localises to the cytoplasm. The enzyme catalyses UDP-N-acetyl-alpha-D-muramoyl-L-alanine + D-glutamate + ATP = UDP-N-acetyl-alpha-D-muramoyl-L-alanyl-D-glutamate + ADP + phosphate + H(+). It participates in cell wall biogenesis; peptidoglycan biosynthesis. In terms of biological role, cell wall formation. Catalyzes the addition of glutamate to the nucleotide precursor UDP-N-acetylmuramoyl-L-alanine (UMA). In Aliivibrio salmonicida (strain LFI1238) (Vibrio salmonicida (strain LFI1238)), this protein is UDP-N-acetylmuramoylalanine--D-glutamate ligase.